Here is a 484-residue protein sequence, read N- to C-terminus: uncharacterized protein (484 aa).

The helical transmembrane segment at Pro-25–Leu-45 threads the bilayer. The EF-hand domain maps to Leu-384 to Asn-419. Positions 397, 399, 401, and 408 each coordinate Ca(2+).

It is found in the membrane. This is an uncharacterized protein from Arabidopsis thaliana (Mouse-ear cress).